The chain runs to 882 residues: MTDHKEMSTKYDPNQVEDGRYQDWLKEDLFKPNANPDAKPYSIVIPPPNVTGKLHLGHAWDTTLQDMLIRQKRMQGYDVLWLPGMDHAGIATQAKVEAKLAEQGISRYDLGREKFIDQVWEWKDEYAATIHDQWAKMGLSLDYSRERFTLDDGLSDAVRKVFVNLYNKGLIYRGEYIINWDPKARTALSDIEVLHQDDEGAFYHVSYPLTDGSGSIEIATTRPETLPGDTAIAVHPDDERYADLVGKTVTLPLMNREIPIIADHYVDKDFGTGALKITPAHDPNDFEVGNRHDLPRINVMNEDASMNESAGKYNGMDRFEARKAIVADLKEQGFLIKVDPMTHSVGHSERTGVQVEARLSTQWFVKMKPLAEMALKNQETDQKVNFVPERFENTFTQWMENVHDWVISRQLWWGHQIPAWYHKQTGEMYVGEEAPEDIENWTQDSDVLDTWFSSALWPFSTMGWPNTEAPDFKRYFPTNTLVTGYDIIFFWVSRMIFQSLEFTEQRPFEHVLIHGLIRDEQGRKMSKSLGNGIDPMEVIEKYGADALRWFLTSGSTPGQDVRFSYTKMDAAWNFINKIWNASRFVIMNLEDTPAPTKVPEAANLDLTDKWILSQLNQTVADVTRLYEGFEFGEAGRTLYNFIWNDFCDWYIEMAKEVLYGDDQEAIANKRYNLAYVLDQTLRLLHPVMPFVTEEIWQSMPHTGESIMTASYPEVHAELDDQEATTQMNALIDLIRSVRNIRSEANAPLSKPIDILINIQDTPLMAIFKQNQDFIERFVHPKSLEIAEGLTAPALAKTAIISGAEVYVPLAELLDLDEEITRLEGELKRLNGEIKRAQGKLANKGFTDRAPEKVVQEERDKQADYEQQYQSVEKRLAELKAAR.

The 'HIGH' region motif lies at 48–58 (PNVTGKLHLGH). Positions 524-528 (KMSKS) match the 'KMSKS' region motif. Lysine 527 provides a ligand contact to ATP. The stretch at 809–882 (LAELLDLDEE…KRLAELKAAR (74 aa)) forms a coiled coil. Residues 844 to 866 (GFTDRAPEKVVQEERDKQADYEQ) form a disordered region. Over residues 845–863 (FTDRAPEKVVQEERDKQAD) the composition is skewed to basic and acidic residues.

It belongs to the class-I aminoacyl-tRNA synthetase family. ValS type 1 subfamily. Monomer.

It localises to the cytoplasm. The catalysed reaction is tRNA(Val) + L-valine + ATP = L-valyl-tRNA(Val) + AMP + diphosphate. In terms of biological role, catalyzes the attachment of valine to tRNA(Val). As ValRS can inadvertently accommodate and process structurally similar amino acids such as threonine, to avoid such errors, it has a 'posttransfer' editing activity that hydrolyzes mischarged Thr-tRNA(Val) in a tRNA-dependent manner. This is Valine--tRNA ligase from Latilactobacillus sakei subsp. sakei (strain 23K) (Lactobacillus sakei subsp. sakei).